Here is a 512-residue protein sequence, read N- to C-terminus: Rab11 family-interacting protein 2 (512 aa).

In terms of domain architecture, C2 spans 1-120 (MMLSEQAQKW…DKQRRKTEWF (120 aa)). A necessary for its cellular translocation to the plasma membrane region spans residues 15–102 (VQVTVLQAKD…GLDKFLGQVA (88 aa)). Disordered stretches follow at residues 169-239 (DKMK…MSSE) and 262-285 (VPES…KMNQ). Positions 178–188 (GTFSDTSSAII) are enriched in polar residues. Residues 226–236 (HSMSDLSGSHM) are compositionally biased toward low complexity. The residue at position 227 (S227) is a Phosphoserine; by MARK2. S277 is modified (phosphoserine). The NPF 1 motif lies at 323 to 325 (NPF). Residues 361 to 374 (ERVTGKKDSRRSDK) show a composition bias toward basic and acidic residues. The interval 361 to 392 (ERVTGKKDSRRSDKLNNGGSDSPCDLKSPNAF) is disordered. 2 consecutive short sequence motifs (NPF) follow at residues 406 to 408 (NPF) and 440 to 442 (NPF). The region spanning 437–499 (PDSNPFDATA…EETPSILRVP (63 aa)) is the FIP-RBD domain. The segment at 465–512 (ELLRRKDTHIRELEDYIDNLLVRVMEETPSILRVPYEPSRKAGKFSNS) is necessary for interaction with AP2A1, RAB11A, subcellular location, endocytosis activity and homooligomerization.

In terms of assembly, homooligomerizes in a Rab11-independent manner. Forms a heterooligomeric complex with RAB11FIP4. Interacts with AP2A1, MYO5B, RAB25 and REPS1. Interacts with RAB11A and RAB11B (activated GTP-bound form). Interacts with NPC1L1. Interacts (via NPF motifs) with EHD1 and EHD3. Interacts with TICAM2; this interaction directs RAB11FIP2 to the phagosome. Interacts with RAB14 and RAB25 (GTP-bound forms). In terms of processing, phosphorylation at Ser-227 by MARK2 regulates epithelial cell polarity.

It is found in the cell projection. Its subcellular location is the phagocytic cup. It localises to the cell membrane. The protein localises to the recycling endosome membrane. Its function is as follows. A Rab11 effector binding preferentially phosphatidylinositol 3,4,5-trisphosphate (PtdInsP3) and phosphatidic acid (PA) and acting in the regulation of the transport of vesicles from the endosomal recycling compartment (ERC) to the plasma membrane. Involved in insulin granule exocytosis. Also involved in receptor-mediated endocytosis and membrane trafficking of recycling endosomes, probably originating from clathrin-coated vesicles. Required in a complex with MYO5B and RAB11 for the transport of NPC1L1 to the plasma membrane. Also acts as a regulator of cell polarity. Plays an essential role in phagocytosis through a mechanism involving TICAM2, RAC1 and CDC42 Rho GTPases for controlling actin-dynamics. This chain is Rab11 family-interacting protein 2 (RAB11FIP2), found in Homo sapiens (Human).